We begin with the raw amino-acid sequence, 665 residues long: Envelope glycoprotein (665 aa).

The signal sequence occupies residues 1 to 31 (MESTTLSKPFKNQVNPWGPLIVLLILGRVNP). The tract at residues 32–267 (VALGNSPHQV…KITDSGPRVP (236 aa)) is receptor-binding domain (RBD). The Extracellular portion of the chain corresponds to 32–605 (VALGNSPHQV…FNGSPWFTTL (574 aa)). Asn43 carries an N-linked (GlcNAc...) asparagine; by host glycan. Intrachain disulfides connect Cys77-Cys129, Cys103-Cys118, Cys104-Cys114, Cys152-Cys172, and Cys164-Cys177. Residue Asp117 participates in Zn(2+) binding. N-linked (GlcNAc...) asparagine; by host glycans are attached at residues Asn199 and Asn211. Cysteines 209 and 215 form a disulfide. The disordered stretch occupies residues 266–307 (VPIGPNPVLSDQRPPSQPRSPPHSNSTPTETPLTLPEPPPAG). The N-linked (GlcNAc...) asparagine; by host glycan is linked to Asn324. 6 cysteine pairs are disulfide-bonded: Cys334-Cys337, Cys334-Cys558, Cys364-Cys418, Cys383-Cys395, Cys425-Cys438, and Cys550-Cys557. Positions 334–337 (CWLC) match the CXXC motif. 2 N-linked (GlcNAc...) asparagine; by host glycosylation sites follow: Asn356 and Asn363. Asn396, Asn400, and Asn432 each carry an N-linked (GlcNAc...) asparagine; by host glycan. A fusion peptide region spans residues 470-490 (VSLTLALLLGGLTMGGIAAGV). The stretch at 505–532 (AAVHDDLKEVEKSITNLEKSLTSLSEVV) forms a coiled coil. The tract at residues 533 to 549 (LQNRRGLDLLFLKEGGL) is immunosuppression. Residues 550–558 (CAALKEECC) carry the CX6CC motif. Residues 606 to 626 (ISTIMGPLIVLLLILLLGPCI) form a helical membrane-spanning segment. Cys625 carries the S-palmitoyl cysteine; by host lipid modification. At 627–665 (LNRLVQFVKDRISVVQALVLTQQYHQLKSIDPEEMESRE) the chain is on the cytoplasmic side. The short motif at 650-653 (YHQL) is the YXXL motif; contains endocytosis signal element.

In terms of assembly, the mature envelope protein (Env) consists of a trimer of SU-TM heterodimers attached by a labile interchain disulfide bond. Specific enzymatic cleavages in vivo yield mature proteins. Envelope glycoproteins are synthesized as an inactive precursor that is N-glycosylated and processed likely by host cell furin or by a furin-like protease in the Golgi to yield the mature SU and TM proteins. The cleavage site between SU and TM requires the minimal sequence [KR]-X-[KR]-R. The R-peptide is released from the C-terminus of the cytoplasmic tail of the TM protein upon particle formation as a result of proteolytic cleavage by the viral protease. Cleavage of this peptide is required for TM to become fusogenic. Post-translationally, the CXXC motif is highly conserved across a broad range of retroviral envelope proteins. It is thought to participate in the formation of a labile disulfide bond possibly with the CX6CC motif present in the transmembrane protein. Isomerization of the intersubunit disulfide bond to an SU intrachain disulfide bond is thought to occur upon receptor recognition in order to allow membrane fusion. In terms of processing, the transmembrane protein is palmitoylated. The R-peptide is palmitoylated.

It is found in the virion membrane. The protein resides in the host cell membrane. In terms of biological role, the surface protein (SU) attaches the virus to the host cell by binding to its receptor. This interaction triggers the refolding of the transmembrane protein (TM) and is thought to activate its fusogenic potential by unmasking its fusion peptide. Fusion occurs at the host cell plasma membrane. The transmembrane protein (TM) acts as a class I viral fusion protein. Under the current model, the protein has at least 3 conformational states: pre-fusion native state, pre-hairpin intermediate state, and post-fusion hairpin state. During viral and target cell membrane fusion, the coiled coil regions (heptad repeats) assume a trimer-of-hairpins structure, positioning the fusion peptide in close proximity to the C-terminal region of the ectodomain. The formation of this structure appears to drive apposition and subsequent fusion of viral and target cell membranes. Membranes fusion leads to delivery of the nucleocapsid into the cytoplasm. This Mus musculus (Mouse) protein is Envelope glycoprotein (env).